Consider the following 308-residue polypeptide: tRNA pseudouridine synthase B (308 aa).

Asp-44 serves as the catalytic Nucleophile.

The protein belongs to the pseudouridine synthase TruB family. Type 1 subfamily.

The catalysed reaction is uridine(55) in tRNA = pseudouridine(55) in tRNA. Functionally, responsible for synthesis of pseudouridine from uracil-55 in the psi GC loop of transfer RNAs. The sequence is that of tRNA pseudouridine synthase B from Nitratidesulfovibrio vulgaris (strain DSM 19637 / Miyazaki F) (Desulfovibrio vulgaris).